Consider the following 5381-residue polypeptide: Protein purity of essence (5381 aa).

6 disordered regions span residues 140–174 (KHPE…PKLE), 339–364 (QQQT…TSKD), 599–621 (SPET…QKSA), 683–709 (RNDS…SSGS), 1162–1212 (SGGD…STET), and 1632–1659 (QAAQ…QSER). The segment covering 339–350 (QQQTAAAASTSQ) has biased composition (low complexity). Composition is skewed to low complexity over residues 690–709 (SPPS…SSGS) and 1167–1176 (SSCTSAASSS). Polar residues predominate over residues 1632–1646 (QAAQPNPSEESSQAC). Residues 1647-1658 (DHSEGGEQRQSE) are compositionally biased toward basic and acidic residues. The UBR-type zinc-finger motif lies at 1815 to 1884 (KLCTFSQTQK…EDGSCQALSR (70 aa)). Disordered regions lie at residues 1917 to 1939 (KRSN…KDSI), 2443 to 2479 (KNTT…KQLT), 2632 to 2652 (PDDS…TATQ), 3037 to 3143 (VSAG…DNNE), 3537 to 3562 (KQQQ…DREK), and 4247 to 4280 (HHQQ…KEAA). 4 stretches are compositionally biased toward polar residues: residues 1920–1930 (NTAPGATQQQH), 2470–2479 (SSQQHQKQLT), 2643–2652 (SGPTPVTATQ), and 3048–3058 (NVATDGSTLRT). Over residues 3065–3075 (GSGGSESGGSG) the composition is skewed to gly residues. The span at 3084-3104 (ARSSNFGDHPNTTPPRQSCSS) shows a compositional bias: polar residues. A compositionally biased stretch (gly residues) spans 3119–3132 (SGSGGSASVPGGGL). Residues 4904 to 5374 (PSLKYILRFL…SFIEDLLASL (471 aa)) are UBR4 E3 catalytic module. The segment at 5022–5136 (GLTCFICREG…SSYMQESTQR (115 aa)) adopts a HemiRING-type zinc-finger fold. Positions 5025, 5028, 5074, and 5077 each coordinate Zn(2+). The region spanning 5139–5374 (ISYTSSIHDL…SFIEDLLASL (236 aa)) is the UZI domain.

The protein belongs to the UBR4 family.

Functionally, has a role in growth of the perineurial glial layer of the larval peripheral nerve. May have a role in male fertility and eye development or function. May bind calmodulin. In Drosophila pseudoobscura pseudoobscura (Fruit fly), this protein is Protein purity of essence.